A 172-amino-acid polypeptide reads, in one-letter code: MITMPKLFIYHANQCNPKKCTSLKMAKMNKAILLKNPYKVPKNSLILNPYAEKALSPEDKEIVEKFGITALDCSWKEAELMFKKFKFKNQRSLPFLVACNPINYGKPCMLSTLEAFIAALYITNFKDEAWDLTSCFKWAETFIKVNYELLERYSNAKNSMEVVEIQQDFLRK.

Positions 21, 71, 93, and 112 each coordinate S-adenosyl-L-methionine.

It belongs to the TDD superfamily. TSR3 family.

It localises to the cytoplasm. The enzyme catalyses an N(1)-methylpseudouridine in rRNA + S-adenosyl-L-methionine = N(1)-methyl-N(3)-[(3S)-3-amino-3-carboxypropyl]pseudouridine in rRNA + S-methyl-5'-thioadenosine + H(+). Its function is as follows. Aminocarboxypropyltransferase that catalyzes the aminocarboxypropyl transfer on pseudouridine at position 914 in 16S rRNA. It constitutes the last step in biosynthesis of the hypermodified N1-methyl-N3-(3-amino-3-carboxypropyl) pseudouridine (m1acp3-Psi). The sequence is that of 16S rRNA aminocarboxypropyltransferase from Methanocaldococcus jannaschii (strain ATCC 43067 / DSM 2661 / JAL-1 / JCM 10045 / NBRC 100440) (Methanococcus jannaschii).